A 137-amino-acid polypeptide reads, in one-letter code: Large ribosomal subunit protein uL16 (137 aa).

This sequence belongs to the universal ribosomal protein uL16 family. Part of the 50S ribosomal subunit.

Functionally, binds 23S rRNA and is also seen to make contacts with the A and possibly P site tRNAs. This Anaplasma phagocytophilum (strain HZ) protein is Large ribosomal subunit protein uL16.